A 164-amino-acid chain; its full sequence is Crossover junction endodeoxyribonuclease RuvC (164 aa).

Active-site residues include D7, E67, and D140. D7, E67, and D140 together coordinate Mg(2+).

Belongs to the RuvC family. In terms of assembly, homodimer which binds Holliday junction (HJ) DNA. The HJ becomes 2-fold symmetrical on binding to RuvC with unstacked arms; it has a different conformation from HJ DNA in complex with RuvA. In the full resolvosome a probable DNA-RuvA(4)-RuvB(12)-RuvC(2) complex forms which resolves the HJ. The cofactor is Mg(2+).

It localises to the cytoplasm. The enzyme catalyses Endonucleolytic cleavage at a junction such as a reciprocal single-stranded crossover between two homologous DNA duplexes (Holliday junction).. Its function is as follows. The RuvA-RuvB-RuvC complex processes Holliday junction (HJ) DNA during genetic recombination and DNA repair. Endonuclease that resolves HJ intermediates. Cleaves cruciform DNA by making single-stranded nicks across the HJ at symmetrical positions within the homologous arms, yielding a 5'-phosphate and a 3'-hydroxyl group; requires a central core of homology in the junction. The consensus cleavage sequence is 5'-(A/T)TT(C/G)-3'. Cleavage occurs on the 3'-side of the TT dinucleotide at the point of strand exchange. HJ branch migration catalyzed by RuvA-RuvB allows RuvC to scan DNA until it finds its consensus sequence, where it cleaves and resolves the cruciform DNA. This Chloroflexus aggregans (strain MD-66 / DSM 9485) protein is Crossover junction endodeoxyribonuclease RuvC.